Consider the following 396-residue polypeptide: Tryptophan synthase beta chain (396 aa).

Residue Lys-86 is modified to N6-(pyridoxal phosphate)lysine.

This sequence belongs to the TrpB family. In terms of assembly, tetramer of two alpha and two beta chains. It depends on pyridoxal 5'-phosphate as a cofactor.

It catalyses the reaction (1S,2R)-1-C-(indol-3-yl)glycerol 3-phosphate + L-serine = D-glyceraldehyde 3-phosphate + L-tryptophan + H2O. Its pathway is amino-acid biosynthesis; L-tryptophan biosynthesis; L-tryptophan from chorismate: step 5/5. Functionally, the beta subunit is responsible for the synthesis of L-tryptophan from indole and L-serine. The chain is Tryptophan synthase beta chain from Aliivibrio salmonicida (strain LFI1238) (Vibrio salmonicida (strain LFI1238)).